Here is a 374-residue protein sequence, read N- to C-terminus: MDVIEATEGTTTFLVPVQDSTGQFPPGTAPVFFNRRMELNRDATVLLLSVLQPSDYLDAMGATGVRGLRVAHEVGIPVTINDRDPEAIPLIRENVARLGLPVTVTCRDACSLLFEQAFDAVDIDPFGTPAPFTDAGIRGTRRFLLLTATDTAPLCGAHLKAGIRRYFARPGNTGYHGEVGLRILLGFVARETVKYDRGIEPLFCFAREHFVRLNLRLTRGPKAADRTIERLGFILQCPTCAYREELPGMFPPAATCPFCGKPLRPIGPLFLGAISSDEILGQMQARLPSCGLGTQKELEKLLTTCREELPTSSHYDYHRVAQQLVVSPPKIETLLEALRSAGFDASRTHYSGTGVKTNAPLPVLYDAIRGKNEP.

The Trm1 methyltransferase domain maps to 4-368 (IEATEGTTTF…APLPVLYDAI (365 aa)). S-adenosyl-L-methionine-binding residues include R41, R66, D82, D108, and A109. 4 residues coordinate Zn(2+): C237, C240, C256, and C259.

The protein belongs to the class I-like SAM-binding methyltransferase superfamily. Trm1 family.

The enzyme catalyses guanosine(26) in tRNA + 2 S-adenosyl-L-methionine = N(2)-dimethylguanosine(26) in tRNA + 2 S-adenosyl-L-homocysteine + 2 H(+). Its function is as follows. Dimethylates a single guanine residue at position 26 of a number of tRNAs using S-adenosyl-L-methionine as donor of the methyl groups. This is tRNA (guanine(26)-N(2))-dimethyltransferase from Methanoregula boonei (strain DSM 21154 / JCM 14090 / 6A8).